A 177-amino-acid polypeptide reads, in one-letter code: Probable prophage lysozyme (177 aa).

Catalysis depends on glutamate 35, which acts as the Proton donor. Aspartate 44 acts as the Nucleophile in catalysis.

This sequence belongs to the glycosyl hydrolase 24 family.

It carries out the reaction Hydrolysis of (1-&gt;4)-beta-linkages between N-acetylmuramic acid and N-acetyl-D-glucosamine residues in a peptidoglycan and between N-acetyl-D-glucosamine residues in chitodextrins.. Functionally, essential for lysis of bacterial cell wall, by showing cell wall hydrolyzing activity. This is Probable prophage lysozyme (rrrQ) from Escherichia coli (strain K12).